Here is a 261-residue protein sequence, read N- to C-terminus: MAHSIKEVKALLKEIHNLKALDASEWNKDERKGVQQAIASRRKQLEKESALVAHYEEMTRYEENILSDNPEAVICGIDEVGRGPLAGPVVACAVILNADHAYYGLDDSKKVSAANRQKLSEALIEKTTAYAYGIATPEEIDDLNIYQATQVAMMRAIENLNVTPTHLLIDAMELPLDIAQTSIIKGDAKSVSIAAASILAKEHRDTYMRQLAEQYPGYDFEHNVGYGTKAHLEGIKRLGIIPEHRKSFEPIKSIVLEKLDI.

The RNase H type-2 domain maps to 72 to 260; sequence AVICGIDEVG…IKSIVLEKLD (189 aa). 3 residues coordinate a divalent metal cation: Asp-78, Glu-79, and Asp-170.

Belongs to the RNase HII family. Requires Mn(2+) as cofactor. Mg(2+) is required as a cofactor.

It localises to the cytoplasm. The enzyme catalyses Endonucleolytic cleavage to 5'-phosphomonoester.. In terms of biological role, endonuclease that specifically degrades the RNA of RNA-DNA hybrids. The sequence is that of Ribonuclease HII from Staphylococcus carnosus (strain TM300).